A 430-amino-acid polypeptide reads, in one-letter code: 5-methylthioadenosine/S-adenosylhomocysteine deaminase (430 aa).

Zn(2+) contacts are provided by H59 and H61. Residues E88 and H181 each coordinate substrate. H208 is a binding site for Zn(2+). E211 and D296 together coordinate substrate. Residue D296 coordinates Zn(2+).

The protein belongs to the metallo-dependent hydrolases superfamily. MTA/SAH deaminase family. It depends on Zn(2+) as a cofactor.

The catalysed reaction is S-adenosyl-L-homocysteine + H2O + H(+) = S-inosyl-L-homocysteine + NH4(+). The enzyme catalyses S-methyl-5'-thioadenosine + H2O + H(+) = S-methyl-5'-thioinosine + NH4(+). Functionally, catalyzes the deamination of 5-methylthioadenosine and S-adenosyl-L-homocysteine into 5-methylthioinosine and S-inosyl-L-homocysteine, respectively. Is also able to deaminate adenosine. This is 5-methylthioadenosine/S-adenosylhomocysteine deaminase from Aquifex aeolicus (strain VF5).